Here is a 250-residue protein sequence, read N- to C-terminus: NAD-dependent protein deacylase (250 aa).

The Deacetylase sirtuin-type domain maps to 1–248; that stretch reads MLGEVSKILA…PKLVEEIRRI (248 aa). Residue 20–39 participates in NAD(+) binding; the sequence is GAGISAESGIPTFRGKDGLW. Positions 64 and 67 each coordinate substrate. 98–101 serves as a coordination point for NAD(+); it reads QNVD. Residue His116 is the Proton acceptor of the active site. Positions 124, 127, 150, and 153 each coordinate Zn(2+). Residues 190-192, 216-218, and Ala234 each bind NAD(+); these read GTS and NIE.

It belongs to the sirtuin family. Class III subfamily. The cofactor is Zn(2+).

Its subcellular location is the cytoplasm. It carries out the reaction N(6)-acetyl-L-lysyl-[protein] + NAD(+) + H2O = 2''-O-acetyl-ADP-D-ribose + nicotinamide + L-lysyl-[protein]. The enzyme catalyses N(6)-succinyl-L-lysyl-[protein] + NAD(+) + H2O = 2''-O-succinyl-ADP-D-ribose + nicotinamide + L-lysyl-[protein]. In terms of biological role, NAD-dependent lysine deacetylase and desuccinylase that specifically removes acetyl and succinyl groups on target proteins. Modulates the activities of several proteins which are inactive in their acylated form. Deacetylates the N-terminal lysine residue of Alba, the major archaeal chromatin protein and that, in turn, increases Alba's DNA binding affinity, thereby repressing transcription. This is NAD-dependent protein deacylase from Pyrococcus furiosus (strain ATCC 43587 / DSM 3638 / JCM 8422 / Vc1).